The chain runs to 440 residues: Thymidine phosphorylase (440 aa).

This sequence belongs to the thymidine/pyrimidine-nucleoside phosphorylase family. In terms of assembly, homodimer.

It carries out the reaction thymidine + phosphate = 2-deoxy-alpha-D-ribose 1-phosphate + thymine. It functions in the pathway pyrimidine metabolism; dTMP biosynthesis via salvage pathway; dTMP from thymine: step 1/2. Functionally, the enzymes which catalyze the reversible phosphorolysis of pyrimidine nucleosides are involved in the degradation of these compounds and in their utilization as carbon and energy sources, or in the rescue of pyrimidine bases for nucleotide synthesis. This Shigella flexneri serotype 5b (strain 8401) protein is Thymidine phosphorylase.